Consider the following 155-residue polypeptide: Interleukin-2 (155 aa).

The N-terminal stretch at 1 to 20 (MYRMQLLSCIALTLALVANG) is a signal peptide. An O-linked (GalNAc...) threonine glycan is attached at Thr-23. An intrachain disulfide couples Cys-79 to Cys-127.

It belongs to the IL-2 family.

It localises to the secreted. Functionally, cytokine produced by activated CD4-positive helper T-cells and to a lesser extend activated CD8-positive T-cells and natural killer (NK) cells that plays pivotal roles in the immune response and tolerance. Binds to a receptor complex composed of either the high-affinity trimeric IL-2R (IL2RA/CD25, IL2RB/CD122 and IL2RG/CD132) or the low-affinity dimeric IL-2R (IL2RB and IL2RG). Interaction with the receptor leads to oligomerization and conformation changes in the IL-2R subunits resulting in downstream signaling starting with phosphorylation of JAK1 and JAK3. In turn, JAK1 and JAK3 phosphorylate the receptor to form a docking site leading to the phosphorylation of several substrates including STAT5. This process leads to activation of several pathways including STAT, phosphoinositide-3-kinase/PI3K and mitogen-activated protein kinase/MAPK pathways. Functions as a T-cell growth factor and can increase NK-cell cytolytic activity as well. Promotes strong proliferation of activated B-cells and subsequently immunoglobulin production. Plays a pivotal role in regulating the adaptive immune system by controlling the survival and proliferation of regulatory T-cells, which are required for the maintenance of immune tolerance. Moreover, participates in the differentiation and homeostasis of effector T-cell subsets, including Th1, Th2, Th17 as well as memory CD8-positive T-cells. The polypeptide is Interleukin-2 (IL2) (Capra hircus (Goat)).